The following is a 469-amino-acid chain: Ribosomal protein uS12 methylthiotransferase RimO (469 aa).

Residues 34–144 form the MTTase N-terminal domain; that stretch reads NKIGFVSLGC…VLEHVHQFAP (111 aa). The [4Fe-4S] cluster site is built by cysteine 43, cysteine 79, cysteine 108, cysteine 176, cysteine 180, and cysteine 183. The Radical SAM core domain maps to 162-399; it reads LTPKHYAYLK…MLVQQEISAA (238 aa). The TRAM domain maps to 402 to 468; that stretch reads QKRIGSTMKV…EYDLWGSLVR (67 aa).

The protein belongs to the methylthiotransferase family. RimO subfamily. [4Fe-4S] cluster is required as a cofactor.

The protein localises to the cytoplasm. It catalyses the reaction L-aspartate(89)-[ribosomal protein uS12]-hydrogen + (sulfur carrier)-SH + AH2 + 2 S-adenosyl-L-methionine = 3-methylsulfanyl-L-aspartate(89)-[ribosomal protein uS12]-hydrogen + (sulfur carrier)-H + 5'-deoxyadenosine + L-methionine + A + S-adenosyl-L-homocysteine + 2 H(+). In terms of biological role, catalyzes the methylthiolation of an aspartic acid residue of ribosomal protein uS12. The polypeptide is Ribosomal protein uS12 methylthiotransferase RimO (Vibrio vulnificus (strain YJ016)).